An 804-amino-acid chain; its full sequence is Tubulin polyglutamylase TTLL13 (804 aa).

The disordered stretch occupies residues M1–R41. Residues N4–S30 adopt a coiled-coil conformation. Residues S11–V26 show a composition bias toward acidic residues. The TTL domain occupies R85–E430. Residues K202, Q208 to G209, Q230 to I233, and K243 to D245 each bind ATP. Q208 provides a ligand contact to a protein. R269 is a binding site for L-glutamate. ATP is bound at residue T291–N292. The L-glutamate site is built by Y293 and K311. Positions 376, 389, and 391 each coordinate Mg(2+). H392 serves as a coordination point for a protein. The tract at residues R401–G482 is c-MTBD region. K407 lines the L-glutamate pocket. Coiled coils occupy residues A504–N541 and Q585–L609. A disordered region spans residues I519–T556. Positions E536–R551 are enriched in basic and acidic residues.

The protein belongs to the tubulin--tyrosine ligase family. Mg(2+) is required as a cofactor. Highly expressed in heart and testis. Expressed in brain, kidney, liver, lung, muscle and trachea. In the brain, expressed in ependymal cilia, cortex, corpus callosum and striatum.

It carries out the reaction (L-glutamyl)(n)-gamma-L-glutamyl-L-glutamyl-[protein] + L-glutamate + ATP = (L-glutamyl)(n+1)-gamma-L-glutamyl-L-glutamyl-[protein] + ADP + phosphate + H(+). In terms of biological role, polyglutamylase which modifies tubulin, generating polyglutamate side chains of variable lengths on the gamma-carboxyl group of specific glutamate residues within the C-terminal tail of tubulin. Mediates ATP-dependent polyglutamate side-chain elongation of the polyglutamylation reaction but not the initiation step. Preferentially modifies the alpha-tubulin tail over a beta-tail. This chain is Tubulin polyglutamylase TTLL13, found in Mus musculus (Mouse).